Consider the following 275-residue polypeptide: Peflin (275 aa).

8 consecutive repeat copies span residues 21-29 (PPGGYYPGP), 31-39 (HGGGQYGSG), 41-49 (PPGGGYGAP), 50-59 (APGGPYGYPS), 60-68 (AGGVPSGTP), 76-84 (PPGGPYGQL), 85-91 (PPGGPYG), and 92-100 (TQPGHYGQG). Disordered regions lie at residues 21–45 (PPGG…PGGG) and 59–103 (SAGG…GGVP). The interval 21–100 (PPGGYYPGPP…GTQPGHYGQG (80 aa)) is 8 X 9 AA approximate tandem repeat of [AP]-P-G-G-P-Y-G-G-P-P. Residues 31-45 (HGGGQYGSGLPPGGG) show a composition bias toward gly residues. The segment covering 59–70 (SAGGVPSGTPSG) has biased composition (low complexity). 5 consecutive EF-hand domains span residues 105–140 (NVDP…SNWS), 146–174 (TCLM…WKFL), 172–207 (KFLQ…MGYN), 208–244 (LSPQ…LQVL), and 245–274 (TEAF…ASRM). Ca(2+) is bound by residues D118, D120, S122, Y124, and E129. The Ca(2+) site is built by D185, D187, S189, S191, and E196. The interval 195–275 (TELQQALSQM…FVTMTASRML (81 aa)) is required for interaction with PDCD6.

Heterodimer; heterodimerizes (via the EF-hand 5) with PDCD6. Dissociates from PDCD6 in presence of calcium. Post-translationally, ubiquitinated by the BCR(KLHL12) E3 ubiquitin ligase complex.

Its subcellular location is the cytoplasm. It is found in the endoplasmic reticulum. It localises to the membrane. The protein localises to the cytoplasmic vesicle. The protein resides in the COPII-coated vesicle membrane. Calcium-binding protein that acts as an adapter that bridges unrelated proteins or stabilizes weak protein-protein complexes in response to calcium. Together with PDCD6, acts as a calcium-dependent adapter for the BCR(KLHL12) complex, a complex involved in endoplasmic reticulum (ER)-Golgi transport by regulating the size of COPII coats. In response to cytosolic calcium increase, the heterodimer formed with PDCD6 interacts with, and bridges together the BCR(KLHL12) complex and SEC31 (SEC31A or SEC31B), promoting monoubiquitination of SEC31 and subsequent collagen export, which is required for neural crest specification. Its role in the heterodimer formed with PDCD6 is however unclear: some evidence shows that PEF1 and PDCD6 work together and promote association between PDCD6 and SEC31 in presence of calcium. Other reports show that PEF1 dissociates from PDCD6 in presence of calcium, and may act as a negative regulator of PDCD6. Also acts as a negative regulator of ER-Golgi transport; possibly by inhibiting interaction between PDCD6 and SEC31. The polypeptide is Peflin (Mus musculus (Mouse)).